The chain runs to 257 residues: UPF0246 protein KPK_4750 (257 aa).

This sequence belongs to the UPF0246 family.

The sequence is that of UPF0246 protein KPK_4750 from Klebsiella pneumoniae (strain 342).